Here is a 210-residue protein sequence, read N- to C-terminus: Orotate phosphoribosyltransferase (210 aa).

5-phospho-alpha-D-ribose 1-diphosphate is bound by residues R94, K98, H100, and 120–128 (EDLISTGGS). S124 contributes to the orotate binding site.

The protein belongs to the purine/pyrimidine phosphoribosyltransferase family. PyrE subfamily. As to quaternary structure, homodimer. The cofactor is Mg(2+).

It catalyses the reaction orotidine 5'-phosphate + diphosphate = orotate + 5-phospho-alpha-D-ribose 1-diphosphate. It functions in the pathway pyrimidine metabolism; UMP biosynthesis via de novo pathway; UMP from orotate: step 1/2. Functionally, catalyzes the transfer of a ribosyl phosphate group from 5-phosphoribose 1-diphosphate to orotate, leading to the formation of orotidine monophosphate (OMP). This is Orotate phosphoribosyltransferase from Bacillus cereus (strain B4264).